The primary structure comprises 140 residues: Holo-[acyl-carrier-protein] synthase (140 aa).

Mg(2+)-binding residues include D8 and E62.

It belongs to the P-Pant transferase superfamily. AcpS family. Mg(2+) is required as a cofactor.

It is found in the cytoplasm. It catalyses the reaction apo-[ACP] + CoA = holo-[ACP] + adenosine 3',5'-bisphosphate + H(+). Functionally, transfers the 4'-phosphopantetheine moiety from coenzyme A to a Ser of acyl-carrier-protein. The chain is Holo-[acyl-carrier-protein] synthase from Cupriavidus pinatubonensis (strain JMP 134 / LMG 1197) (Cupriavidus necator (strain JMP 134)).